The chain runs to 85 residues: Small ribosomal subunit protein bS16 (85 aa).

This sequence belongs to the bacterial ribosomal protein bS16 family.

The protein is Small ribosomal subunit protein bS16 of Nitrosomonas eutropha (strain DSM 101675 / C91 / Nm57).